Here is a 258-residue protein sequence, read N- to C-terminus: E3 ubiquitin ligase TRIM40 (258 aa).

Residues 14–56 form an RING-type zinc finger; it reads CPICQESLKEAVSTNCGHLFCRVCLTQHVEKASASGVFCCPLC. The B box-type zinc-finger motif lies at 66–107; sequence GTGYICPNHQKRVCRFCEESRLLLCVECLVSPEHMSHHELTI. Positions 71, 74, 93, and 99 each coordinate Zn(2+). Residues 107-159 are a coiled coil; the sequence is IENALSHYKERLNRRSRKLRKDIAELQRLKAQQEKKLQALQFQVDHGNHRLEA.

The protein belongs to the TRIM/RBCC family. In terms of assembly, interacts with NEDD8. As to expression, highly expressed in normal gastrointestinal epithelia but that is down-regulated in gastrointestinal carcinomas and chronic inflammatory lesions of the gastrointestinal tract.

It catalyses the reaction S-ubiquitinyl-[E2 ubiquitin-conjugating enzyme]-L-cysteine + [acceptor protein]-L-lysine = [E2 ubiquitin-conjugating enzyme]-L-cysteine + N(6)-ubiquitinyl-[acceptor protein]-L-lysine.. In terms of biological role, E3 ubiquitin-protein ligase that plays a role in the limitation of the innate immune response. Mediates inhibition of the RLR signaling pathway by ubiquitinating RIGI and IFIH1 receptors, leading to their proteasomal degradation. Also promotes the neddylation of IKBKG/NEMO, stabilizing NFKBIA, and thereby inhibiting of NF-kappa-B nuclear translocation and activation. This is E3 ubiquitin ligase TRIM40 (TRIM40) from Homo sapiens (Human).